A 366-amino-acid polypeptide reads, in one-letter code: Putative integrase/recombinase HI_1572 (366 aa).

Residues 54–133 (ITLDELIDKY…SLSALMAKTI (80 aa)) enclose the Core-binding (CB) domain. The 164-residue stretch at 168-331 (IFVSGYDVEH…DMAEGYKTKA (164 aa)) folds into the Tyr recombinase domain. Active-site residues include Arg-201, Lys-226, and His-308. The active-site O-(3'-phospho-DNA)-tyrosine intermediate is Tyr-318.

Belongs to the 'phage' integrase family.

The chain is Putative integrase/recombinase HI_1572 from Haemophilus influenzae (strain ATCC 51907 / DSM 11121 / KW20 / Rd).